Consider the following 38-residue polypeptide: ITINVKCTSPQQCLRPCKDRFGQHAGGKCINGKCKCYP.

3 disulfides stabilise this stretch: cysteine 7–cysteine 29, cysteine 13–cysteine 34, and cysteine 17–cysteine 36.

It belongs to the short scorpion toxin superfamily. Potassium channel inhibitor family. Alpha-KTx 02 subfamily. Expressed by the venom gland.

The protein localises to the secreted. Inhibitor of voltage-gated potassium channels (Kv). It is capable of displacing the binding of radio-labeled noxiustoxin (AC P08815) to rat brain synaptosomes with high affinity (about 100 pM). It is also capable of inhibiting transient potassium-currents (resembling I(A)-type currents), in cultured rat cerebellar granule cells. About 50% of the peak currents are reduced by application of a 1.5 uM solution of this toxin. This is Potassium channel toxin alpha-KTx 2.3 from Centruroides limpidus (Mexican scorpion).